The following is a 693-amino-acid chain: TBC1 domain family member 14 (693 aa).

Phosphoserine is present on Ser-91. 2 disordered regions span residues 108–130 (PSCA…SSTF) and 271–304 (NAQK…RKNL). The span at 271–288 (NAQKDSKRIQKEYEDKAG) shows a compositional bias: basic and acidic residues. Residue Ser-295 is modified to Phosphoserine. The region spanning 401-611 (GIPPSVRGKV…RIWDVFCRDG (211 aa)) is the Rab-GAP TBC domain.

Interacts with ULK1. May interact with RAB11A and RAB11B, but does not exhibit any GTPase-activating activity toward these proteins. Interacts with TRAPPC8.

It localises to the golgi apparatus. The protein resides in the cis-Golgi network. It is found in the trans-Golgi network. Its function is as follows. Plays a role in the regulation of starvation-induced autophagosome formation. Together with the TRAPPIII complex, regulates a constitutive trafficking step from peripheral recycling endosomes to the early Golgi, maintaining the cycling pool of ATG9 required for initiation of autophagy. This Homo sapiens (Human) protein is TBC1 domain family member 14 (TBC1D14).